A 216-amino-acid polypeptide reads, in one-letter code: ATP-dependent Clp protease proteolytic subunit (216 aa).

The Nucleophile role is filled by serine 109. Histidine 134 is a catalytic residue.

It belongs to the peptidase S14 family. In terms of assembly, fourteen ClpP subunits assemble into 2 heptameric rings which stack back to back to give a disk-like structure with a central cavity, resembling the structure of eukaryotic proteasomes.

It localises to the cytoplasm. It carries out the reaction Hydrolysis of proteins to small peptides in the presence of ATP and magnesium. alpha-casein is the usual test substrate. In the absence of ATP, only oligopeptides shorter than five residues are hydrolyzed (such as succinyl-Leu-Tyr-|-NHMec, and Leu-Tyr-Leu-|-Tyr-Trp, in which cleavage of the -Tyr-|-Leu- and -Tyr-|-Trp bonds also occurs).. Its function is as follows. Cleaves peptides in various proteins in a process that requires ATP hydrolysis. Has a chymotrypsin-like activity. Plays a major role in the degradation of misfolded proteins. This is ATP-dependent Clp protease proteolytic subunit from Rhodospirillum rubrum (strain ATCC 11170 / ATH 1.1.1 / DSM 467 / LMG 4362 / NCIMB 8255 / S1).